A 336-amino-acid polypeptide reads, in one-letter code: Ribosomal RNA large subunit methyltransferase F (336 aa).

The protein belongs to the methyltransferase superfamily. METTL16/RlmF family.

It localises to the cytoplasm. It catalyses the reaction adenosine(1618) in 23S rRNA + S-adenosyl-L-methionine = N(6)-methyladenosine(1618) in 23S rRNA + S-adenosyl-L-homocysteine + H(+). Its function is as follows. Specifically methylates the adenine in position 1618 of 23S rRNA. The polypeptide is Ribosomal RNA large subunit methyltransferase F (Yersinia pestis bv. Antiqua (strain Angola)).